The sequence spans 269 residues: Ice-binding protein (269 aa).

Positions 1-24 (MLKINRKYAIILAIVAFSSFQTEA) are cleaved as a signal peptide. 7 consecutive short sequence motifs (probable ice-binding motif (T/S-X-T)) follow at residues 45–47 (TVT), 65–67 (SAT), 128–130 (SAQ), 154–156 (TLT), 180–182 (SAT), 198–200 (SIT), and 218–220 (AVT). The tract at residues 240 to 263 (VPEPDSSLAVLGSGLVSLLFAFRK) is PEP C-terminal anchor. A helical transmembrane segment spans residues 245-261 (SSLAVLGSGLVSLLFAF).

It belongs to the ice-binding protein family.

Its subcellular location is the cell outer membrane. Its function is as follows. A probable ice-binding protein that has ice-structuring activities in vitro. Thought not to anchor the cyanobacterium to ice surfaces, as its habitat is shallow puddles fed by glacier meltwater. The polypeptide is Ice-binding protein (Nostoc sp. (strain HG1)).